The chain runs to 148 residues: Large ribosomal subunit protein bL9 (148 aa).

It belongs to the bacterial ribosomal protein bL9 family.

Its function is as follows. Binds to the 23S rRNA. This chain is Large ribosomal subunit protein bL9, found in Pseudomonas fluorescens (strain ATCC BAA-477 / NRRL B-23932 / Pf-5).